The chain runs to 205 residues: Peptidyl-tRNA hydrolase (205 aa).

Y18 contributes to the tRNA binding site. The active-site Proton acceptor is the H23. TRNA-binding residues include Y69, N71, and N117.

Belongs to the PTH family. Monomer.

The protein localises to the cytoplasm. The enzyme catalyses an N-acyl-L-alpha-aminoacyl-tRNA + H2O = an N-acyl-L-amino acid + a tRNA + H(+). Functionally, hydrolyzes ribosome-free peptidyl-tRNAs (with 1 or more amino acids incorporated), which drop off the ribosome during protein synthesis, or as a result of ribosome stalling. Catalyzes the release of premature peptidyl moieties from peptidyl-tRNA molecules trapped in stalled 50S ribosomal subunits, and thus maintains levels of free tRNAs and 50S ribosomes. In Thermosynechococcus vestitus (strain NIES-2133 / IAM M-273 / BP-1), this protein is Peptidyl-tRNA hydrolase.